Consider the following 66-residue polypeptide: Large ribosomal subunit protein uL29 (66 aa).

The protein belongs to the universal ribosomal protein uL29 family.

The protein is Large ribosomal subunit protein uL29 of Thermotoga neapolitana (strain ATCC 49049 / DSM 4359 / NBRC 107923 / NS-E).